The chain runs to 618 residues: Proline--tRNA ligase (618 aa).

Belongs to the class-II aminoacyl-tRNA synthetase family. ProS type 1 subfamily. In terms of assembly, homodimer.

The protein resides in the cytoplasm. The enzyme catalyses tRNA(Pro) + L-proline + ATP = L-prolyl-tRNA(Pro) + AMP + diphosphate. Functionally, catalyzes the attachment of proline to tRNA(Pro) in a two-step reaction: proline is first activated by ATP to form Pro-AMP and then transferred to the acceptor end of tRNA(Pro). As ProRS can inadvertently accommodate and process non-cognate amino acids such as alanine and cysteine, to avoid such errors it has two additional distinct editing activities against alanine. One activity is designated as 'pretransfer' editing and involves the tRNA(Pro)-independent hydrolysis of activated Ala-AMP. The other activity is designated 'posttransfer' editing and involves deacylation of mischarged Ala-tRNA(Pro). The misacylated Cys-tRNA(Pro) is not edited by ProRS. This is Proline--tRNA ligase from Streptococcus pyogenes serotype M4 (strain MGAS10750).